The primary structure comprises 205 residues: Glycerol-3-phosphate acyltransferase (205 aa).

The next 5 helical transmembrane spans lie at 4 to 24 (IAPG…AILV), 56 to 76 (VAVL…AYAL), 81 to 101 (FWLG…VFFG), 112 to 132 (FGAI…TWLL), and 138 to 158 (GYSS…VWWF).

It belongs to the PlsY family. Probably interacts with PlsX.

Its subcellular location is the cell inner membrane. The catalysed reaction is an acyl phosphate + sn-glycerol 3-phosphate = a 1-acyl-sn-glycero-3-phosphate + phosphate. Its pathway is lipid metabolism; phospholipid metabolism. Functionally, catalyzes the transfer of an acyl group from acyl-phosphate (acyl-PO(4)) to glycerol-3-phosphate (G3P) to form lysophosphatidic acid (LPA). This enzyme utilizes acyl-phosphate as fatty acyl donor, but not acyl-CoA or acyl-ACP. This Citrobacter koseri (strain ATCC BAA-895 / CDC 4225-83 / SGSC4696) protein is Glycerol-3-phosphate acyltransferase.